Consider the following 208-residue polypeptide: NAD(P)H-quinone oxidoreductase subunit I (208 aa).

4Fe-4S ferredoxin-type domains follow at residues glycine 55–valine 84 and arginine 95–glutamate 124. Residues cysteine 64, cysteine 67, cysteine 70, cysteine 74, cysteine 104, cysteine 107, cysteine 110, and cysteine 114 each contribute to the [4Fe-4S] cluster site.

The protein belongs to the complex I 23 kDa subunit family. In terms of assembly, NDH-1 is composed of at least 11 different subunits. It depends on [4Fe-4S] cluster as a cofactor.

The protein resides in the cellular thylakoid membrane. It carries out the reaction a plastoquinone + NADH + (n+1) H(+)(in) = a plastoquinol + NAD(+) + n H(+)(out). It catalyses the reaction a plastoquinone + NADPH + (n+1) H(+)(in) = a plastoquinol + NADP(+) + n H(+)(out). NDH-1 shuttles electrons from an unknown electron donor, via FMN and iron-sulfur (Fe-S) centers, to quinones in the respiratory and/or the photosynthetic chain. The immediate electron acceptor for the enzyme in this species is believed to be plastoquinone. Couples the redox reaction to proton translocation, and thus conserves the redox energy in a proton gradient. The polypeptide is NAD(P)H-quinone oxidoreductase subunit I (Prochlorococcus marinus (strain MIT 9301)).